A 357-amino-acid chain; its full sequence is DNA replication and repair protein RecF (357 aa).

Residue 30–37 (GPNGSGKT) participates in ATP binding.

It belongs to the RecF family.

The protein resides in the cytoplasm. In terms of biological role, the RecF protein is involved in DNA metabolism; it is required for DNA replication and normal SOS inducibility. RecF binds preferentially to single-stranded, linear DNA. It also seems to bind ATP. The polypeptide is DNA replication and repair protein RecF (Vibrio campbellii (strain ATCC BAA-1116)).